A 177-amino-acid chain; its full sequence is Bifunctional protein PyrR (177 aa).

Residues 99–111 carry the PRPP-binding motif; it reads VVLVDDVLYTGRT.

Belongs to the purine/pyrimidine phosphoribosyltransferase family. PyrR subfamily. As to quaternary structure, homodimer and homohexamer; in equilibrium.

The catalysed reaction is UMP + diphosphate = 5-phospho-alpha-D-ribose 1-diphosphate + uracil. Regulates transcriptional attenuation of the pyrimidine nucleotide (pyr) operon by binding in a uridine-dependent manner to specific sites on pyr mRNA. This disrupts an antiterminator hairpin in the RNA and favors formation of a downstream transcription terminator, leading to a reduced expression of downstream genes. Its function is as follows. Also displays a weak uracil phosphoribosyltransferase activity which is not physiologically significant. The protein is Bifunctional protein PyrR of Clostridioides difficile (strain 630) (Peptoclostridium difficile).